The primary structure comprises 175 residues: Adenylyl-sulfate kinase (175 aa).

Residue 12–19 coordinates ATP; sequence GLSGAGKT. The Phosphoserine intermediate role is filled by Ser-86.

Belongs to the APS kinase family.

It catalyses the reaction adenosine 5'-phosphosulfate + ATP = 3'-phosphoadenylyl sulfate + ADP + H(+). Its pathway is sulfur metabolism; hydrogen sulfide biosynthesis; sulfite from sulfate: step 2/3. Its function is as follows. Catalyzes the synthesis of activated sulfate. The polypeptide is Adenylyl-sulfate kinase (Synechococcus sp. (strain JA-2-3B'a(2-13)) (Cyanobacteria bacterium Yellowstone B-Prime)).